We begin with the raw amino-acid sequence, 567 residues long: Urease subunit alpha (567 aa).

Positions 128–567 (GGIDAHVHFI…LPMSQRYFLF (440 aa)) constitute a Urease domain. Residues histidine 133, histidine 135, and lysine 216 each contribute to the Ni(2+) site. Position 216 is an N6-carboxylysine (lysine 216). Histidine 218 is a binding site for substrate. Residues histidine 245 and histidine 271 each coordinate Ni(2+). Catalysis depends on histidine 319, which acts as the Proton donor. Position 359 (aspartate 359) interacts with Ni(2+).

Belongs to the metallo-dependent hydrolases superfamily. Urease alpha subunit family. As to quaternary structure, heterotrimer of UreA (gamma), UreB (beta) and UreC (alpha) subunits. Three heterotrimers associate to form the active enzyme. The cofactor is Ni cation. Post-translationally, carboxylation allows a single lysine to coordinate two nickel ions.

The protein localises to the cytoplasm. The catalysed reaction is urea + 2 H2O + H(+) = hydrogencarbonate + 2 NH4(+). It participates in nitrogen metabolism; urea degradation; CO(2) and NH(3) from urea (urease route): step 1/1. The chain is Urease subunit alpha from Blochmanniella pennsylvanica (strain BPEN).